A 401-amino-acid chain; its full sequence is Inositol phosphorylceramide synthase catalytic subunit AUR1 (401 aa).

Residues 1–41 lie on the Cytoplasmic side of the membrane; sequence MANPFSRWFLSERPPNCHVADLETSLDPHQTLLKVQKYKPA. The chain crosses the membrane as a helical span at residues 42–62; that stretch reads LSDWVHYIFLGSIMLFVFITN. Over 63-64 the chain is Lumenal; that stretch reads PA. The helical transmembrane segment at 65-85 threads the bilayer; that stretch reads PWIFKILFYCFLGTLFIIPAT. Over 86–87 the chain is Cytoplasmic; the sequence is SQ. A helical membrane pass occupies residues 88-108; the sequence is FFFNALPILTWVALYFTSSYF. The Lumenal segment spans residues 109 to 155; that stretch reads PDDRRPPITVKVLPAVETILYGDNLSDILATSTNSFLDILAWLPYGL. An N-linked (GlcNAc...) asparagine glycan is attached at asparagine 132. The chain crosses the membrane as a helical span at residues 156–176; that stretch reads FHFGAPFVVAAILFVFGPPTV. At 177-178 the chain is on the cytoplasmic side; sequence LQ. The helical transmembrane segment at 179–199 threads the bilayer; it reads GYAFAFGYMNLFGVIMQNVFP. The Lumenal portion of the chain corresponds to 200-245; it reads AAPPWYKILYGLQSANYDMHGSPGGLARIDKLLGINMYTTAFSNSS. A helical membrane pass occupies residues 246–266; sequence VIFGAFPSLHSGCATMEALFF. Over 267 to 268 the chain is Cytoplasmic; it reads CY. The helical transmembrane segment at 269–289 threads the bilayer; that stretch reads CFPKLKPLFIAYVCWLWWSTM. Residues 290-291 lie on the Lumenal side of the membrane; sequence YL. A helical transmembrane segment spans residues 292-312; the sequence is THHYFVDLMAGSVLSYVIFQY. Residues 313-401 are Cytoplasmic-facing; that stretch reads TKYTHLPIVD…SITSLGVKRA (89 aa). The disordered stretch occupies residues 374–401; that stretch reads VSPSLFDGSTSVSRSSATSITSLGVKRA. A compositionally biased stretch (low complexity) spans 382–395; that stretch reads STSVSRSSATSITS. A phosphoserine mark is found at serine 392 and serine 395.

This sequence belongs to the AUR1 family. As to quaternary structure, component of the inositol phosphorylceramide synthase complex composed of at least AUR1 and KEI1.

The protein localises to the golgi apparatus. The protein resides in the golgi stack membrane. It carries out the reaction an N-(2R-hydroxy-very-long-chain fatty acyl)-(R)-4-hydroxysphingoid base + a 1,2-diacyl-sn-glycero-3-phospho-(1D-myo-inositol) = a 1D-myo-inositol-1-phospho-N-[(R)-2-hydroxy-very-long-chain fatty acyl]-(R)-4-hydroxysphingoid base + a 1,2-diacyl-sn-glycerol. With respect to regulation, inhibited by aureobasidin A (AbA), khafrefungin and rustmicin. In terms of biological role, catalytic component of the inositol phosphorylceramide synthase which catalyzes the addition of a phosphorylinositol group onto ceramide to form inositol phosphorylceramide, an essential step in sphingolipid biosynthesis. In Saccharomyces cerevisiae (strain ATCC 204508 / S288c) (Baker's yeast), this protein is Inositol phosphorylceramide synthase catalytic subunit AUR1.